Reading from the N-terminus, the 256-residue chain is (E)-benzylidenesuccinyl-CoA hydratase (256 aa).

Residue Glu110 is the Nucleophile of the active site. The active-site Proton acceptor is the Glu130.

This sequence belongs to the enoyl-CoA hydratase/isomerase family. Homotrimer.

The catalysed reaction is (2S)-[(R)-hydroxy(phenyl)methyl]succinyl-CoA = (E)-2-benzylidenesuccinyl-CoA + H2O. The protein operates within xenobiotic degradation; toluene degradation. In terms of biological role, involved in an anaerobic toluene degradation pathway. Catalyzes the hydration of (E)-2-benzylidenesuccinyl-CoA to the corresponding alcohol intermediate, 2-(alpha-hydroxybenzyl)succinyl-CoA. Also accepts the N-acetylcysteamine (NAC) thioester of (E)-benzylidenesuccinate. In Thauera aromatica, this protein is (E)-benzylidenesuccinyl-CoA hydratase.